A 331-amino-acid chain; its full sequence is MTATTQTPRHDWSKDEVLALFEQPFNDLLHQAQTTHRAHFDPNTVQVSTLLSIKTGACPEDCKYCPQSVRYDTGLEREQILAVEEVVAAARRARDAGATRFCMGAAWRSPKDRDLETVEAMVREVKALGLETCLTLGMLRDGQAERLREAGLDYYNHNLDTSEDYYDEIITTRSYQDRLDTLARVRDAGLKTCCGGIIGMGETRQDRAELLRTLASLPVQPQSVPINQLVQVPGTPLHGVEPPDPFEFVRTIAVARILMPASYVRLSAGREQMSDELQALCFLAGANSIFYGDKLLTTGNPEADKDRRLLARLGMGFEAHACAQAEAEDLG.

A Radical SAM core domain is found at 43–267 (NTVQVSTLLS…LMPASYVRLS (225 aa)). [4Fe-4S] cluster-binding residues include Cys-58, Cys-62, and Cys-65. [2Fe-2S] cluster-binding residues include Cys-102, Cys-133, Cys-193, and Arg-265.

The protein belongs to the radical SAM superfamily. Biotin synthase family. In terms of assembly, homodimer. [4Fe-4S] cluster serves as cofactor. The cofactor is [2Fe-2S] cluster.

It carries out the reaction (4R,5S)-dethiobiotin + (sulfur carrier)-SH + 2 reduced [2Fe-2S]-[ferredoxin] + 2 S-adenosyl-L-methionine = (sulfur carrier)-H + biotin + 2 5'-deoxyadenosine + 2 L-methionine + 2 oxidized [2Fe-2S]-[ferredoxin]. It participates in cofactor biosynthesis; biotin biosynthesis; biotin from 7,8-diaminononanoate: step 2/2. Catalyzes the conversion of dethiobiotin (DTB) to biotin by the insertion of a sulfur atom into dethiobiotin via a radical-based mechanism. This is Biotin synthase from Alkalilimnicola ehrlichii (strain ATCC BAA-1101 / DSM 17681 / MLHE-1).